Reading from the N-terminus, the 376-residue chain is MTLAPLDASKVKITTTQHASKPKPNSELVFGKSFTDHMLTAEWTAEKGWGTPEIKPYQNLSLDPSAVVFHYAFELFEGMKAYRTVDNKITMFRPDMNMKRMNKSAQRICLPTFDPEELITLIGKLIQQDKCLVPEGKGYSLYIRPTLIGTTAGLGVSTPDRALLYVICCPVGPYYKTGFKAVRLEATDYATRAWPGGCGDKKLGANYAPCVLPQLQAASRGYQQNLWLFGPNNNITEVGTMNAFFVFKDSKTGKKELVTAPLDGTILEGVTRDSILNLAKERLEPSEWTISERYFTIGEVTERSKNGELLEAFGSGTAAIVSPIKEIGWKGEQINIPLLPGEQTGPLAKEVAQWINGIQYGETEHGNWSRVVTDLN.

Position 202 is an N6-(pyridoxal phosphate)lysine (lysine 202).

The protein belongs to the class-IV pyridoxal-phosphate-dependent aminotransferase family. Requires pyridoxal 5'-phosphate as cofactor.

The protein resides in the cytoplasm. It carries out the reaction L-leucine + 2-oxoglutarate = 4-methyl-2-oxopentanoate + L-glutamate. The catalysed reaction is L-isoleucine + 2-oxoglutarate = (S)-3-methyl-2-oxopentanoate + L-glutamate. It catalyses the reaction L-valine + 2-oxoglutarate = 3-methyl-2-oxobutanoate + L-glutamate. The enzyme catalyses a 2-oxocarboxylate + L-methionine = 4-methylsulfanyl-2-oxobutanoate + an L-alpha-amino acid. It functions in the pathway amino-acid biosynthesis; L-isoleucine biosynthesis; L-isoleucine from 2-oxobutanoate: step 4/4. The protein operates within amino-acid biosynthesis; L-leucine biosynthesis; L-leucine from 3-methyl-2-oxobutanoate: step 4/4. It participates in amino-acid biosynthesis; L-valine biosynthesis; L-valine from pyruvate: step 4/4. Its pathway is amino-acid biosynthesis; L-methionine biosynthesis via salvage pathway; L-methionine from S-methyl-5-thio-alpha-D-ribose 1-phosphate: step 6/6. Cytoplasmic isozyme of branched-chain-amino-acid aminotransferase, which catalyzes the first reaction in the catabolism of the essential branched chain amino acids (BCAAs) leucine, isoleucine, and valine. Catalyzes the formation of methionine from 2-keto-4-methylthiobutyrate (KMTB) in the methionine salvage pathway primarily using BCAAs (leucine, isoleucine, and valine) as well as lysine and proline as the amino donors. Involved in cell cycle regulation. The sequence is that of Branched-chain-amino-acid aminotransferase, cytosolic from Saccharomyces cerevisiae (strain ATCC 204508 / S288c) (Baker's yeast).